The following is a 285-amino-acid chain: 2-dehydro-3-deoxyphosphooctonate aldolase (285 aa).

It belongs to the KdsA family.

The protein localises to the cytoplasm. It catalyses the reaction D-arabinose 5-phosphate + phosphoenolpyruvate + H2O = 3-deoxy-alpha-D-manno-2-octulosonate-8-phosphate + phosphate. It participates in carbohydrate biosynthesis; 3-deoxy-D-manno-octulosonate biosynthesis; 3-deoxy-D-manno-octulosonate from D-ribulose 5-phosphate: step 2/3. It functions in the pathway bacterial outer membrane biogenesis; lipopolysaccharide biosynthesis. This is 2-dehydro-3-deoxyphosphooctonate aldolase from Polaromonas sp. (strain JS666 / ATCC BAA-500).